Reading from the N-terminus, the 216-residue chain is Uracil-DNA glycosylase (216 aa).

Residue Asp-59 is the Proton acceptor of the active site.

This sequence belongs to the uracil-DNA glycosylase (UDG) superfamily. UNG family.

The protein resides in the cytoplasm. The enzyme catalyses Hydrolyzes single-stranded DNA or mismatched double-stranded DNA and polynucleotides, releasing free uracil.. Excises uracil residues from the DNA which can arise as a result of misincorporation of dUMP residues by DNA polymerase or due to deamination of cytosine. This is Uracil-DNA glycosylase from Staphylococcus epidermidis (strain ATCC 12228 / FDA PCI 1200).